A 141-amino-acid polypeptide reads, in one-letter code: ATP synthase F(0) complex subunit C3, mitochondrial (141 aa).

A mitochondrion-targeting transit peptide spans 1–66 (MFACAKLART…REFQTSVISR (66 aa)). Residues 82 to 102 (VGVAGSGAGIGTVFGSLIIGY) traverse the membrane as a helical segment. Lys-109 carries the post-translational modification N6,N6,N6-trimethyllysine. A helical membrane pass occupies residues 117–137 (ILGFALSEAMGLFCLMVAFLI).

It belongs to the ATPase C chain family. As to quaternary structure, F-type ATPases have 2 components, CF(1) - the catalytic core - and CF(0) - the membrane proton channel. CF(1) has five subunits: alpha(3), beta(3), gamma(1), delta(1), epsilon(1). CF(0) has three main subunits: a, b and c. Interacts with TMEM70 and TMEM242. Post-translationally, trimethylated by ATPSCKMT at Lys-109. Methylation is required for proper incorporation of the C subunit into the ATP synthase complex and mitochondrial respiration.

Its subcellular location is the mitochondrion membrane. Its function is as follows. Mitochondrial membrane ATP synthase (F(1)F(0) ATP synthase or Complex V) produces ATP from ADP in the presence of a proton gradient across the membrane which is generated by electron transport complexes of the respiratory chain. F-type ATPases consist of two structural domains, F(1) - containing the extramembraneous catalytic core and F(0) - containing the membrane proton channel, linked together by a central stalk and a peripheral stalk. During catalysis, ATP synthesis in the catalytic domain of F(1) is coupled via a rotary mechanism of the central stalk subunits to proton translocation. Part of the complex F(0) domain. A homomeric c-ring of probably 10 subunits is part of the complex rotary element. This Mus musculus (Mouse) protein is ATP synthase F(0) complex subunit C3, mitochondrial.